The chain runs to 211 residues: 5,6-dimethylbenzimidazole synthase (211 aa).

Residues 22-26, serine 50, leucine 99, and serine 158 each bind FMN; that span reads RRDVR.

It belongs to the BluB family. Homooctamer.

It carries out the reaction FMNH2 + O2 = dialurate + 5,6-dimethylbenzimidazole + D-erythrose 4-phosphate + H(+). Functionally, involved in the biosynthesis of cobalamin (vitamin B12). Catalyzes the oxidative fragmentation and contraction of the isoalloxazine heterocycle and the cleavage of the ribityl tail of FMNH(2) to form 5,6-dimethylbenzimidazole (DMB) and D-erythrose 4-phosphate (E4P). NAD(P)H is only required initially to reduce FMN and oxygen drives the oxidative fragmentation. In Rhodospirillum rubrum (strain ATCC 11170 / ATH 1.1.1 / DSM 467 / LMG 4362 / NCIMB 8255 / S1), this protein is 5,6-dimethylbenzimidazole synthase.